Consider the following 1138-residue polypeptide: uncharacterized protein (1138 aa).

Disordered stretches follow at residues 985 to 1015 (EKKLPTHETNSEIEKEKHSDGKRKESKMAQE) and 1094 to 1138 (LVAT…QNKL). Residues 1110 to 1138 (DDDEYEKYDSGIEDIETDVDEEEEVQNKL) show a composition bias toward acidic residues.

This is an uncharacterized protein from Ostreid herpesvirus 1 (isolate France) (OsHV-1).